The sequence spans 73 residues: uncharacterized protein (73 aa).

It belongs to the asfivirus I73R family.

It is found in the virion. This is an uncharacterized protein from Ornithodoros (relapsing fever ticks).